The sequence spans 369 residues: MVALVVKIGTSSLSDPSTGDLRLATLGGLAETLTRLRRAGHRIILVSSGAVGVGCARLGLKERPATVAGKQAAAAVGQGLLMSMYDRLFGALGQPVAQVLLTRQDLMDRVRYLNARETLSELWRLGTVPIVNENDTVATDELRFGDNDALSALVAGLVEAQWLVLLTDVAGLYSANPRLDPQARLLSEVTEISEELLQSARGRSLWGSGGMASKLEAARIAASAGVATVITEGNTPQNIERILAGEAIGTRFALARPGGRLSLRKRWIGYGLVPAGALHLDEGAVLAVREGGKSLLPAGVRGVEGRFETGALVRLIDGQGLEFARGLVNYSSEELEKIRGRKSHEIAALLGIEGQPPTAVHRDNLVTLS.

Lysine 7 is a binding site for ATP. The substrate site is built by serine 48, aspartate 135, and asparagine 147. ATP is bound by residues 167–168 (TD) and 208–214 (SGGMASK). Positions 275 to 353 (AGALHLDEGA…HEIAALLGIE (79 aa)) constitute a PUA domain.

Belongs to the glutamate 5-kinase family.

It is found in the cytoplasm. The enzyme catalyses L-glutamate + ATP = L-glutamyl 5-phosphate + ADP. Its pathway is amino-acid biosynthesis; L-proline biosynthesis; L-glutamate 5-semialdehyde from L-glutamate: step 1/2. Functionally, catalyzes the transfer of a phosphate group to glutamate to form L-glutamate 5-phosphate. In Gloeobacter violaceus (strain ATCC 29082 / PCC 7421), this protein is Glutamate 5-kinase.